A 93-amino-acid polypeptide reads, in one-letter code: Large ribosomal subunit protein uL23cz/uL23cy (93 aa).

The protein belongs to the universal ribosomal protein uL23 family. Part of the 50S ribosomal subunit.

It localises to the plastid. The protein localises to the chloroplast. Functionally, binds to 23S rRNA. The protein is Large ribosomal subunit protein uL23cz/uL23cy (rpl23-A) of Jasminum nudiflorum (Winter jasmine).